A 131-amino-acid chain; its full sequence is UPF0102 protein YraN (131 aa).

The span at 1-19 (MATVPTRSGSPRQLTTKQT) shows a compositional bias: polar residues. The disordered stretch occupies residues 1–21 (MATVPTRSGSPRQLTTKQTGD).

The protein belongs to the UPF0102 family.

The chain is UPF0102 protein YraN from Escherichia coli (strain K12 / MC4100 / BW2952).